A 273-amino-acid chain; its full sequence is Undecaprenyl-diphosphatase (273 aa).

7 helical membrane passes run 13–35, 45–62, 82–102, 108–128, 186–206, 219–239, and 250–270; these read GLVEGFTEFLPISSTGHLIVFGN, VFEIAIQLGAVLAVVFEY, FVLNLAIAFIPAAVMGLLFDK, LFNPLSVAVMLVLGGFFILWV, TEFSFFLAVPMMVAATAYDVL, LILIGFIAAFVSGLVAVKALL, and FAYYRIVFGIVIIILWLSGWI.

The protein belongs to the UppP family.

Its subcellular location is the cell inner membrane. It catalyses the reaction di-trans,octa-cis-undecaprenyl diphosphate + H2O = di-trans,octa-cis-undecaprenyl phosphate + phosphate + H(+). Its function is as follows. Catalyzes the dephosphorylation of undecaprenyl diphosphate (UPP). Confers resistance to bacitracin. The sequence is that of Undecaprenyl-diphosphatase from Neisseria gonorrhoeae (strain NCCP11945).